The chain runs to 203 residues: MELDFDKMNGLVPAIIQDNETRKVLMLGFMNKEAYDKTVETGKVTFFSRTKNRLWTKGEESGNFLHVVSIKADCDNDTLLIQADPAGPVCHTGTDTCWGEKNEEPVMFLKALQDFIDKRHEEMPQGSYTTSLFESGINKIAQKVGEEAVETVIEATNGTNERLIYEGADLIYHMIVLLTSKGYRIEDLARELQERHSSTWKKH.

The tract at residues Met1 to Phe108 is phosphoribosyl-AMP cyclohydrolase. The interval Leu109–His203 is phosphoribosyl-ATP pyrophosphohydrolase.

It in the N-terminal section; belongs to the PRA-CH family. This sequence in the C-terminal section; belongs to the PRA-PH family.

It is found in the cytoplasm. The catalysed reaction is 1-(5-phospho-beta-D-ribosyl)-ATP + H2O = 1-(5-phospho-beta-D-ribosyl)-5'-AMP + diphosphate + H(+). It catalyses the reaction 1-(5-phospho-beta-D-ribosyl)-5'-AMP + H2O = 1-(5-phospho-beta-D-ribosyl)-5-[(5-phospho-beta-D-ribosylamino)methylideneamino]imidazole-4-carboxamide. The protein operates within amino-acid biosynthesis; L-histidine biosynthesis; L-histidine from 5-phospho-alpha-D-ribose 1-diphosphate: step 2/9. Its pathway is amino-acid biosynthesis; L-histidine biosynthesis; L-histidine from 5-phospho-alpha-D-ribose 1-diphosphate: step 3/9. The protein is Histidine biosynthesis bifunctional protein HisIE of Bacteroides thetaiotaomicron (strain ATCC 29148 / DSM 2079 / JCM 5827 / CCUG 10774 / NCTC 10582 / VPI-5482 / E50).